We begin with the raw amino-acid sequence, 429 residues long: Bifunctional protein GlmU (429 aa).

The pyrophosphorylase stretch occupies residues 1-223 (MKTSILILAA…EDEFMGINDK (223 aa)). UDP-N-acetyl-alpha-D-glucosamine contacts are provided by residues 8 to 11 (LAAG), Lys22, and 81 to 82 (GT). Asp102 serves as a coordination point for Mg(2+). 4 residues coordinate UDP-N-acetyl-alpha-D-glucosamine: Gly135, Glu149, Asn164, and Asn221. Position 221 (Asn221) interacts with Mg(2+). The tract at residues 224-244 (FELSIAENFMQKKIKKYWMQQ) is linker. An N-acetyltransferase region spans residues 245–429 (GVIFHLPQST…KDYYYKKFQK (185 aa)). UDP-N-acetyl-alpha-D-glucosamine contacts are provided by Arg308 and Lys325. His336 acts as the Proton acceptor in catalysis. UDP-N-acetyl-alpha-D-glucosamine-binding residues include Tyr339 and Asn350. Residues 359–360 (NY), Ser378, Ala396, and Arg413 contribute to the acetyl-CoA site.

It in the N-terminal section; belongs to the N-acetylglucosamine-1-phosphate uridyltransferase family. In the C-terminal section; belongs to the transferase hexapeptide repeat family. Homotrimer. It depends on Mg(2+) as a cofactor.

It is found in the cytoplasm. It carries out the reaction alpha-D-glucosamine 1-phosphate + acetyl-CoA = N-acetyl-alpha-D-glucosamine 1-phosphate + CoA + H(+). The catalysed reaction is N-acetyl-alpha-D-glucosamine 1-phosphate + UTP + H(+) = UDP-N-acetyl-alpha-D-glucosamine + diphosphate. It participates in nucleotide-sugar biosynthesis; UDP-N-acetyl-alpha-D-glucosamine biosynthesis; N-acetyl-alpha-D-glucosamine 1-phosphate from alpha-D-glucosamine 6-phosphate (route II): step 2/2. It functions in the pathway nucleotide-sugar biosynthesis; UDP-N-acetyl-alpha-D-glucosamine biosynthesis; UDP-N-acetyl-alpha-D-glucosamine from N-acetyl-alpha-D-glucosamine 1-phosphate: step 1/1. Its pathway is bacterial outer membrane biogenesis; LPS lipid A biosynthesis. Functionally, catalyzes the last two sequential reactions in the de novo biosynthetic pathway for UDP-N-acetylglucosamine (UDP-GlcNAc). The C-terminal domain catalyzes the transfer of acetyl group from acetyl coenzyme A to glucosamine-1-phosphate (GlcN-1-P) to produce N-acetylglucosamine-1-phosphate (GlcNAc-1-P), which is converted into UDP-GlcNAc by the transfer of uridine 5-monophosphate (from uridine 5-triphosphate), a reaction catalyzed by the N-terminal domain. The sequence is that of Bifunctional protein GlmU from Campylobacter jejuni subsp. jejuni serotype O:2 (strain ATCC 700819 / NCTC 11168).